A 98-amino-acid polypeptide reads, in one-letter code: Citrate lyase acyl carrier protein (98 aa).

O-(phosphoribosyl dephospho-coenzyme A)serine is present on serine 14.

The protein belongs to the CitD family. In terms of assembly, oligomer with a subunit composition of (alpha,beta,gamma)6.

Its subcellular location is the cytoplasm. Covalent carrier of the coenzyme of citrate lyase. This Shigella boydii serotype 18 (strain CDC 3083-94 / BS512) protein is Citrate lyase acyl carrier protein.